Reading from the N-terminus, the 358-residue chain is Na(+)/H(+) exchange regulatory cofactor NHE-RF1 (358 aa).

Residue Ser2 is modified to N-acetylserine. Ser2 and Ser46 each carry phosphoserine. The PDZ 1 domain maps to 14-94 (LCCLEKGPNG…AVRLLVVDPD (81 aa)). The segment covering 114–134 (QAGPEQAGPPAAPGEQGPAGE) has biased composition (low complexity). Positions 114–151 (QAGPEQAGPPAAPGEQGPAGENEPREVEKSHPERRELR) are disordered. Residues 135–151 (NEPREVEKSHPERRELR) are compositionally biased toward basic and acidic residues. Positions 154–234 (LCAMKKGPNG…EAKLLVVDKE (81 aa)) constitute a PDZ 2 domain. Residues 247 to 358 (SSEHLNGPLP…SEKKELFSNL (112 aa)) form a disordered region. Positions 272 to 290 (LAPAASESPRPALARSASS) are enriched in low complexity. 3 positions are modified to phosphoserine: Ser279, Ser289, and Ser290. Residue Thr292 is modified to Phosphothreonine. Residues Ser293, Ser298, and Ser301 each carry the phosphoserine modification. Low complexity predominate over residues 308–327 (TAPSSTSSSSDPILDFSISL). A compositionally biased stretch (basic and acidic residues) spans 348–358 (WSEKKELFSNL).

As to quaternary structure, homodimer, and heterodimer with NHERF2. Binds the N-termini of EZR, RDX and MSN. Binds the C-termini of PDGFRA, PDGFRB, ADRB2, NOS2 and CFTR. Binds ARHGAP17, EPI64, RACK1, OPRK1, GNAQ, CTNNB1 and PLCB3. Binds PDZK1. Interacts with CLCN3. Binds the C-terminus of PAG1. In resting T-cells, part of a PAG1-NHERF1-MSN complex which is disrupted upon TCR activation. Forms a complex with CFTR and SLC4A7. Forms a complex with SLC4A7 and ATP6V1B1. Interacts with TRPC4 (via the PDZ-binding domain). Directly interacts with HTR4. Interacts (via the PDZ 1 domain) with PODXL (via the C-terminal PDZ-binding motif DTHL); interaction is not detected in glomerular epithelium cells. Interacts (via the PDZ 1 domain) with PODXL (via the C-terminal PDZ-binding motif DTHL); the interaction take place early in the secretory pathway and is necessary for its apical membrane sorting. Interacts with SLC26A3. Interacts with MCC. Interacts with SLC34A1. Interacts (via the PDZ domains) with SLC26A6 isoform 4 and isoform 5. Interacts (via PDZ domains) with ACE2 (via PDZ-binding motif); the interaction may enhance ACE2 membrane residence. Post-translationally, phosphorylated on serine residues. Detected in ileum, duodenum and in kidney, where it is found in the glomerulus, the proximal tubule, the thick ascending limb of Henle's loop and the cortical collecting duct.

The protein resides in the cytoplasm. It localises to the apical cell membrane. It is found in the cell projection. Its subcellular location is the filopodium. The protein localises to the ruffle. The protein resides in the microvillus. It localises to the endomembrane system. Scaffold protein that connects plasma membrane proteins with members of the ezrin/moesin/radixin family and thereby helps to link them to the actin cytoskeleton and to regulate their surface expression. Necessary for recycling of internalized ADRB2. Was first known to play a role in the regulation of the activity and subcellular location of SLC9A3. Necessary for cAMP-mediated phosphorylation and inhibition of SLC9A3. Involved in sperm capacitation. May participate in the regulation of the chloride and bicarbonate homeostasis in spermatozoa. May enhance Wnt signaling. May participate in HTR4 targeting to microvilli. Involved in the regulation of phosphate reabsorption in the renal proximal tubules. The protein is Na(+)/H(+) exchange regulatory cofactor NHE-RF1 (NHERF1) of Oryctolagus cuniculus (Rabbit).